Here is a 242-residue protein sequence, read N- to C-terminus: MTVKLGVNIDHVATLRSARGADFPDPLTAAKVCLGMGAEFIVVHLRGDRRHIKDKDIENLCKTYPGKIHLECAATKEMQDIALKYKPASVCLVPEFKGELTTRGGLNLNKKNFENISKITTNLQAKGIKVSLFINPAAEEVRLAKKTGAQIIELCTGPYSEAKTKKQQYKELEDLAMSSILGAELGLEVHSGHGLNYENVVPVANLEAMECLNIGFAIIAKSVFTGLAAAVMEMQEAVKERY.

Asn8 contacts 3-amino-2-oxopropyl phosphate. 10-11 (DH) contributes to the 1-deoxy-D-xylulose 5-phosphate binding site. Arg19 serves as a coordination point for 3-amino-2-oxopropyl phosphate. Catalysis depends on His44, which acts as the Proton acceptor. Arg46 and His51 together coordinate 1-deoxy-D-xylulose 5-phosphate. Glu71 serves as the catalytic Proton acceptor. Residue Thr101 coordinates 1-deoxy-D-xylulose 5-phosphate. Residue His193 is the Proton donor of the active site. Residues Gly194 and 215–216 (GF) contribute to the 3-amino-2-oxopropyl phosphate site.

The protein belongs to the PNP synthase family. In terms of assembly, homooctamer; tetramer of dimers.

It is found in the cytoplasm. The enzyme catalyses 3-amino-2-oxopropyl phosphate + 1-deoxy-D-xylulose 5-phosphate = pyridoxine 5'-phosphate + phosphate + 2 H2O + H(+). The protein operates within cofactor biosynthesis; pyridoxine 5'-phosphate biosynthesis; pyridoxine 5'-phosphate from D-erythrose 4-phosphate: step 5/5. Its function is as follows. Catalyzes the complicated ring closure reaction between the two acyclic compounds 1-deoxy-D-xylulose-5-phosphate (DXP) and 3-amino-2-oxopropyl phosphate (1-amino-acetone-3-phosphate or AAP) to form pyridoxine 5'-phosphate (PNP) and inorganic phosphate. The sequence is that of Pyridoxine 5'-phosphate synthase from Elusimicrobium minutum (strain Pei191).